The sequence spans 485 residues: Trigger factor (485 aa).

The PPIase FKBP-type domain occupies 171–256 (GDRVVIDFVG…VKAVKAPGEA (86 aa)). The segment at 443-485 (FADDEDEAAEAAAPASEAGASKGVISEGVISEGSAPSHETGAA) is disordered. A compositionally biased stretch (low complexity) spans 452 to 462 (EAAAPASEAGA).

The protein belongs to the FKBP-type PPIase family. Tig subfamily.

The protein localises to the cytoplasm. The catalysed reaction is [protein]-peptidylproline (omega=180) = [protein]-peptidylproline (omega=0). In terms of biological role, involved in protein export. Acts as a chaperone by maintaining the newly synthesized protein in an open conformation. Functions as a peptidyl-prolyl cis-trans isomerase. The protein is Trigger factor of Methylobacterium sp. (strain 4-46).